A 308-amino-acid chain; its full sequence is Ribonuclease HIII (308 aa).

One can recognise an RNase H type-2 domain in the interval Asp92–Leu308. Positions 98, 99, and 204 each coordinate a divalent metal cation.

This sequence belongs to the RNase HII family. RnhC subfamily. Requires Mn(2+) as cofactor. The cofactor is Mg(2+).

The protein localises to the cytoplasm. The catalysed reaction is Endonucleolytic cleavage to 5'-phosphomonoester.. In terms of biological role, endonuclease that specifically degrades the RNA of RNA-DNA hybrids. The protein is Ribonuclease HIII of Oceanobacillus iheyensis (strain DSM 14371 / CIP 107618 / JCM 11309 / KCTC 3954 / HTE831).